A 422-amino-acid chain; its full sequence is Serine protease HTRA2, mitochondrial (422 aa).

Residues 1 to 17 constitute a mitochondrion transit peptide; that stretch reads MALRGSHRLEVIFKRCI. Positions 18–74 are excised as a propeptide; it reads ASPVFHSHAANRRSSQLAIKGTDPSSNGNSGQDQQNGEQKAKGWRRLVRFFVPFSLG. Residues 29 to 55 are compositionally biased toward polar residues; it reads RRSSQLAIKGTDPSSNGNSGQDQQNGE. The segment at 29–56 is disordered; the sequence is RRSSQLAIKGTDPSSNGNSGQDQQNGEQ. The helical transmembrane segment at 64 to 82 threads the bilayer; it reads LVRFFVPFSLGAAVSAAVI. 2 consecutive short sequence motifs (IAP-binding) follow at residues 75–78 and 94–97; these read AAVS and SKMT. Residues 139-302 are serine protease; it reads SNGSGFIIEQ…IPIDYVKVFL (164 aa). Residues histidine 157, aspartate 189, and serine 266 each act as charge relay system in the active site. A PDZ domain is found at 325–410; it reads MGITMLTLTP…NLDIVILRGV (86 aa).

It belongs to the peptidase S1C family. In terms of assembly, interacts with th/DIAP1 (via BIR 2 domain).

It is found in the mitochondrion intermembrane space. It localises to the mitochondrion membrane. It carries out the reaction Cleavage of non-polar aliphatic amino-acids at the P1 position, with a preference for Val, Ile and Met. At the P2 and P3 positions, Arg is selected most strongly with a secondary preference for other hydrophilic residues.. In terms of biological role, serine protease that shows proteolytic activity against a non-specific substrate beta-casein. Promotes or induces cell death either by direct binding to and inhibition of BIRC proteins (also called inhibitor of apoptosis proteins, IAPs), leading to an increase in caspase activity, or by a BIRC inhibition-independent, caspase-independent and serine protease activity-dependent mechanism. Can antagonize antiapoptotic activity of th/Diap1 by directly inducing the degradation of th/Diap1. In Drosophila yakuba (Fruit fly), this protein is Serine protease HTRA2, mitochondrial.